Reading from the N-terminus, the 1030-residue chain is Alpha-L-rhamnosidase (1030 aa).

The segment at 133–297 (PSLEGSSWIW…GAGPWGRVAP (165 aa)) is carbohydrate-binding module-67 (CBM67). Ca(2+) is bound by residues Asp-179 and Asn-180. Alpha-L-rhamnose-binding positions include 179–180 (DN) and Trp-203. Ca(2+) is bound by residues Asn-228 and Pro-233. Alpha-L-rhamnose contacts are provided by residues Asp-630, 634–636 (RDE), Asp-643, and Trp-695. Glu-636 serves as the catalytic Proton donor. Glu-895 functions as the Proton acceptor in the catalytic mechanism. Alpha-L-rhamnose is bound at residue His-916.

This sequence belongs to the glycosyl hydrolase 78 family.

The catalysed reaction is Hydrolysis of terminal non-reducing alpha-L-rhamnose residues in alpha-L-rhamnosides.. Functionally, alpha-L-rhamnosidase which is able to degrade p-nitrophenyl-alpha-L-rhamnopyranoside (PNP-Rha) in vitro. Releases L-rhamnose from citrus flavonoids such as naringin, rutin and hesperidin, and the arabinogalactan-protein (AGP) gum arabic. AGPs are a family of proteoglycans that are localized on the cell surfaces of higher plants. Cleaves both the alpha-1,6 and the alpha-1,2-linked rhamnosyl residues. This is Alpha-L-rhamnosidase from Streptomyces avermitilis (strain ATCC 31267 / DSM 46492 / JCM 5070 / NBRC 14893 / NCIMB 12804 / NRRL 8165 / MA-4680).